The primary structure comprises 338 residues: tRNA N6-adenosine threonylcarbamoyltransferase (338 aa).

Residues H111 and H115 each coordinate Fe cation. Substrate contacts are provided by residues 134 to 138, D167, G180, and N272; that span reads LVSGG. D300 contacts Fe cation.

It belongs to the KAE1 / TsaD family. Requires Fe(2+) as cofactor.

Its subcellular location is the cytoplasm. The enzyme catalyses L-threonylcarbamoyladenylate + adenosine(37) in tRNA = N(6)-L-threonylcarbamoyladenosine(37) in tRNA + AMP + H(+). In terms of biological role, required for the formation of a threonylcarbamoyl group on adenosine at position 37 (t(6)A37) in tRNAs that read codons beginning with adenine. Is involved in the transfer of the threonylcarbamoyl moiety of threonylcarbamoyl-AMP (TC-AMP) to the N6 group of A37, together with TsaE and TsaB. TsaD likely plays a direct catalytic role in this reaction. This chain is tRNA N6-adenosine threonylcarbamoyltransferase, found in Shewanella halifaxensis (strain HAW-EB4).